The following is a 292-amino-acid chain: MPSLKDLRNRIASVKATQKITKAMQMVAAAKLRRAQEAAEAARPYSQRMGAVLANIAQNVTGEDAPALMAGTGKDDVHLLVVCTAERGLCGGFNSQIARLARDHARKLLAEGKTVKIITVGKKGADILRREFASLIIDHVNLREVKQLAFVHADQIGHKVIELFEQGEFDVCTLFYSEFKSVIAQIPTAQQIIPASAGDVAQAETAGDAIYEYEPDPAAILSTLIPRNISVQIFRALLENVAGEMGAKMSAMDNATRNAGDMINKLSITYNRQRQAQITKELIEIISGAEAL.

The protein belongs to the ATPase gamma chain family. As to quaternary structure, F-type ATPases have 2 components, CF(1) - the catalytic core - and CF(0) - the membrane proton channel. CF(1) has five subunits: alpha(3), beta(3), gamma(1), delta(1), epsilon(1). CF(0) has three main subunits: a, b and c.

It is found in the cell inner membrane. Produces ATP from ADP in the presence of a proton gradient across the membrane. The gamma chain is believed to be important in regulating ATPase activity and the flow of protons through the CF(0) complex. This Brucella anthropi (strain ATCC 49188 / DSM 6882 / CCUG 24695 / JCM 21032 / LMG 3331 / NBRC 15819 / NCTC 12168 / Alc 37) (Ochrobactrum anthropi) protein is ATP synthase gamma chain.